The sequence spans 20 residues: Trypsin inhibitor A chain (20 aa).

This sequence belongs to the protease inhibitor I3 (leguminous Kunitz-type inhibitor) family. As to quaternary structure, heterodimer of an 'A' and a 'B' chain linked by a disulfide bond.

Functionally, inhibits trypsin and alpha-chymotrypsin. This Albizia julibrissin (Silk tree) protein is Trypsin inhibitor A chain.